The sequence spans 344 residues: tRNA N6-adenosine threonylcarbamoyltransferase (344 aa).

Fe cation-binding residues include histidine 111 and histidine 115. Substrate-binding positions include 134–138, aspartate 167, glycine 180, and asparagine 277; that span reads LVSGG. Aspartate 305 contributes to the Fe cation binding site.

This sequence belongs to the KAE1 / TsaD family. Requires Fe(2+) as cofactor.

Its subcellular location is the cytoplasm. The enzyme catalyses L-threonylcarbamoyladenylate + adenosine(37) in tRNA = N(6)-L-threonylcarbamoyladenosine(37) in tRNA + AMP + H(+). Required for the formation of a threonylcarbamoyl group on adenosine at position 37 (t(6)A37) in tRNAs that read codons beginning with adenine. Is involved in the transfer of the threonylcarbamoyl moiety of threonylcarbamoyl-AMP (TC-AMP) to the N6 group of A37, together with TsaE and TsaB. TsaD likely plays a direct catalytic role in this reaction. The protein is tRNA N6-adenosine threonylcarbamoyltransferase of Glaesserella parasuis serovar 5 (strain SH0165) (Haemophilus parasuis).